We begin with the raw amino-acid sequence, 351 residues long: Auxin-responsive protein IAA27 (351 aa).

The disordered stretch occupies residues 1–37; that stretch reads MMNLISFETPPLGRRSQDGGSSSSSITAATTTTNKAK. The segment covering 21 to 34 has biased composition (low complexity); the sequence is SSSSSITAATTTTN. In terms of domain architecture, PB1 spans 233–327; sequence NMFAKVHMDG…SAKRLYIAKN (95 aa).

It belongs to the Aux/IAA family. Homodimers and heterodimers. As to expression, expressed in roots and seedlings.

The protein resides in the nucleus. Aux/IAA proteins are short-lived transcriptional factors that function as repressors of early auxin response genes at low auxin concentrations. The protein is Auxin-responsive protein IAA27 (IAA27) of Oryza sativa subsp. japonica (Rice).